The primary structure comprises 359 residues: tRNA-specific 2-thiouridylase MnmA (359 aa).

ATP is bound by residues 9-16 (GISGGVDS) and methionine 35. Residues 95 to 97 (NPD) are interaction with target base in tRNA. Cysteine 100 (nucleophile) is an active-site residue. Cysteines 100 and 197 form a disulfide. Residue glycine 124 participates in ATP binding. The interval 147 to 149 (KDQ) is interaction with tRNA. Cysteine 197 serves as the catalytic Cysteine persulfide intermediate. Residues 309–310 (RY) form an interaction with tRNA region.

The protein belongs to the MnmA/TRMU family.

The protein localises to the cytoplasm. It carries out the reaction S-sulfanyl-L-cysteinyl-[protein] + uridine(34) in tRNA + AH2 + ATP = 2-thiouridine(34) in tRNA + L-cysteinyl-[protein] + A + AMP + diphosphate + H(+). Catalyzes the 2-thiolation of uridine at the wobble position (U34) of tRNA, leading to the formation of s(2)U34. The sequence is that of tRNA-specific 2-thiouridylase MnmA from Francisella philomiragia subsp. philomiragia (strain ATCC 25017 / CCUG 19701 / FSC 153 / O#319-036).